The sequence spans 1046 residues: Translation initiation factor IF-2 (1046 aa).

The disordered stretch occupies residues Ala49–Gln450. Composition is skewed to low complexity over residues Lys57–Ala80 and Pro89–Ala106. The segment covering Ala107–Ala128 has biased composition (pro residues). The segment covering Ala129–Gly169 has biased composition (low complexity). A compositionally biased stretch (basic and acidic residues) spans Arg177–Gly194. Residues Ala195 to Pro214 show a composition bias toward low complexity. 2 stretches are compositionally biased toward gly residues: residues Pro239 to Gly248 and Gly266 to Gly280. The segment covering Gly302–Pro318 has biased composition (low complexity). Over residues Arg319–Gly414 the composition is skewed to gly residues. The span at Arg418 to Arg427 shows a compositional bias: basic residues. The tr-type G domain maps to Ala539–Asp711. Residues Gly548–Thr555 form a G1 region. Gly548 to Thr555 provides a ligand contact to GTP. Residues Gly573–His577 form a G2 region. Residues Asp598 to Gly601 are G3. GTP contacts are provided by residues Asp598–His602 and Asn652–Asp655. Positions Asn652–Asp655 are G4. The tract at residues Ser688–Lys690 is G5.

Belongs to the TRAFAC class translation factor GTPase superfamily. Classic translation factor GTPase family. IF-2 subfamily.

The protein localises to the cytoplasm. In terms of biological role, one of the essential components for the initiation of protein synthesis. Protects formylmethionyl-tRNA from spontaneous hydrolysis and promotes its binding to the 30S ribosomal subunits. Also involved in the hydrolysis of GTP during the formation of the 70S ribosomal complex. The sequence is that of Translation initiation factor IF-2 from Streptomyces avermitilis (strain ATCC 31267 / DSM 46492 / JCM 5070 / NBRC 14893 / NCIMB 12804 / NRRL 8165 / MA-4680).